Reading from the N-terminus, the 361-residue chain is P2Y purinoceptor 4 (361 aa).

A disordered region spans residues 1–20; it reads MTSAESLLFTSLGPSPSSGD. Residues 1–30 lie on the Extracellular side of the membrane; that stretch reads MTSAESLLFTSLGPSPSSGDGDCRFNEEFK. The chain crosses the membrane as a helical span at residues 31–58; that stretch reads FILLPMSYAVVFVLGLALNAPTLWLFLF. Topologically, residues 59 to 68 are cytoplasmic; it reads RLRPWDATAT. A helical membrane pass occupies residues 69-91; the sequence is YMFHLALSDTLYVLSLPTLVYYY. Over 92-108 the chain is Extracellular; sequence AARNHWPFGTGLCKFVR. Cysteines 104 and 181 form a disulfide. A helical membrane pass occupies residues 109–127; sequence FLFYWNLYCSVLFLTCISV. Residues 128-149 lie on the Cytoplasmic side of the membrane; that stretch reads HRYLGICHPLRAIRWGRPRFAS. The helical transmembrane segment at 150 to 170 threads the bilayer; that stretch reads LLCLGVWLVVAGCLVPNLFFV. The Extracellular portion of the chain corresponds to 171–192; that stretch reads TTNANGTTILCHDTTLPEEFDH. Asn175 carries an N-linked (GlcNAc...) asparagine glycan. The helical transmembrane segment at 193–218 threads the bilayer; that stretch reads YVYFSSAVMVLLFGLPFLITLVCYGL. The Cytoplasmic portion of the chain corresponds to 219–242; it reads MARRLYRPLPGAGQSSSRLRSLRT. Residues 243–265 traverse the membrane as a helical segment; the sequence is IAVVLTVFAVCFVPFHITRTIYY. At 266 to 283 the chain is on the extracellular side; it reads QARLLQADCHVLNIVNVV. Residues 284-305 form a helical membrane-spanning segment; the sequence is YKVTRPLASANSCLDPVLYLFT. Residues 306–361 lie on the Cytoplasmic side of the membrane; that stretch reads GDKYRNQLQQLCRGSKPKPRTAASSLALVTLHEESISRWADTHQDSTFSAYEGDRL.

This sequence belongs to the G-protein coupled receptor 1 family. In terms of processing, phosphorylation of Ser-329 and Ser-330 is a key step in agonist-dependent desensitization and loss of surface P2RY4. This phosphorylation does not involve PKC, nor other calcium-activated kinases. In terms of tissue distribution, widely expressed at low levels. In brain, higher expression in the pineal gland and ventricular system.

Its subcellular location is the cell membrane. Its function is as follows. Receptor for ATP and UTP coupled to G-proteins that activate a phosphatidylinositol-calcium second messenger system. Not activated by ADP or UDP. This is P2Y purinoceptor 4 (P2ry4) from Rattus norvegicus (Rat).